The chain runs to 156 residues: MPRKGPAPKRPVIIDPVYSSPLVTSLINKILLDGKRSTAERIVYGAMEGLREKTGNDPVITLKRALENVKPSLEVKSRRVGGATYQVPIEVKPGRASTLALRWLVGYSRARREKTMTERLMNELLDASNGLGASVKKREDTHKMAESNKAFAHYRW.

This sequence belongs to the universal ribosomal protein uS7 family. As to quaternary structure, part of the 30S ribosomal subunit. Contacts proteins S9 and S11.

One of the primary rRNA binding proteins, it binds directly to 16S rRNA where it nucleates assembly of the head domain of the 30S subunit. Is located at the subunit interface close to the decoding center, probably blocks exit of the E-site tRNA. The polypeptide is Small ribosomal subunit protein uS7 (Streptomyces griseus subsp. griseus (strain JCM 4626 / CBS 651.72 / NBRC 13350 / KCC S-0626 / ISP 5235)).